The following is a 47-amino-acid chain: Large ribosomal subunit protein bL33 (47 aa).

The protein belongs to the bacterial ribosomal protein bL33 family.

This Staphylococcus saprophyticus protein is Large ribosomal subunit protein bL33.